A 276-amino-acid chain; its full sequence is NAD kinase (276 aa).

Aspartate 68 serves as the catalytic Proton acceptor. Residues 68–69 (DG), arginine 73, 138–139 (NE), lysine 149, aspartate 168, 179–184 (TAYSLS), and glutamine 237 contribute to the NAD(+) site.

This sequence belongs to the NAD kinase family. A divalent metal cation serves as cofactor.

Its subcellular location is the cytoplasm. It carries out the reaction NAD(+) + ATP = ADP + NADP(+) + H(+). Functionally, involved in the regulation of the intracellular balance of NAD and NADP, and is a key enzyme in the biosynthesis of NADP. Catalyzes specifically the phosphorylation on 2'-hydroxyl of the adenosine moiety of NAD to yield NADP. This Methanopyrus kandleri (strain AV19 / DSM 6324 / JCM 9639 / NBRC 100938) protein is NAD kinase.